Consider the following 122-residue polypeptide: Small ribosomal subunit protein uS13 (122 aa).

Residues 97 to 122 (PVRGQRTHTNARTRKGPAKAIAGKKK) form a disordered region.

The protein belongs to the universal ribosomal protein uS13 family. Part of the 30S ribosomal subunit. Forms a loose heterodimer with protein S19. Forms two bridges to the 50S subunit in the 70S ribosome.

Functionally, located at the top of the head of the 30S subunit, it contacts several helices of the 16S rRNA. In the 70S ribosome it contacts the 23S rRNA (bridge B1a) and protein L5 of the 50S subunit (bridge B1b), connecting the 2 subunits; these bridges are implicated in subunit movement. Contacts the tRNAs in the A and P-sites. In Bartonella henselae (strain ATCC 49882 / DSM 28221 / CCUG 30454 / Houston 1) (Rochalimaea henselae), this protein is Small ribosomal subunit protein uS13.